The following is a 397-amino-acid chain: 1-deoxy-D-xylulose 5-phosphate reductoisomerase (397 aa).

The NADPH site is built by T17, G18, S19, I20, A45, N47, and N130. Position 131 (K131) interacts with 1-deoxy-D-xylulose 5-phosphate. E132 contributes to the NADPH binding site. D156 is a Mn(2+) binding site. Residues S157, E158, S182, and H205 each coordinate 1-deoxy-D-xylulose 5-phosphate. E158 lines the Mn(2+) pocket. G211 provides a ligand contact to NADPH. 4 residues coordinate 1-deoxy-D-xylulose 5-phosphate: S218, N223, K224, and E227. E227 lines the Mn(2+) pocket.

Belongs to the DXR family. Mg(2+) is required as a cofactor. It depends on Mn(2+) as a cofactor.

It catalyses the reaction 2-C-methyl-D-erythritol 4-phosphate + NADP(+) = 1-deoxy-D-xylulose 5-phosphate + NADPH + H(+). The protein operates within isoprenoid biosynthesis; isopentenyl diphosphate biosynthesis via DXP pathway; isopentenyl diphosphate from 1-deoxy-D-xylulose 5-phosphate: step 1/6. Functionally, catalyzes the NADPH-dependent rearrangement and reduction of 1-deoxy-D-xylulose-5-phosphate (DXP) to 2-C-methyl-D-erythritol 4-phosphate (MEP). The protein is 1-deoxy-D-xylulose 5-phosphate reductoisomerase of Agrobacterium fabrum (strain C58 / ATCC 33970) (Agrobacterium tumefaciens (strain C58)).